A 221-amino-acid chain; its full sequence is Uridylate kinase (221 aa).

Position 7 to 11 (7 to 11) interacts with ATP; it reads KISGK. Glycine 43 is a UMP binding site. Glycine 44 and arginine 48 together coordinate ATP. UMP contacts are provided by residues aspartate 62 and 109–115; that span reads LQPGQST. ATP-binding residues include threonine 135 and tyrosine 141.

It belongs to the UMP kinase family. In terms of assembly, homohexamer.

It is found in the cytoplasm. It catalyses the reaction UMP + ATP = UDP + ADP. Its pathway is pyrimidine metabolism; CTP biosynthesis via de novo pathway; UDP from UMP (UMPK route): step 1/1. Inhibited by UTP. Its function is as follows. Catalyzes the reversible phosphorylation of UMP to UDP. In Ignicoccus hospitalis (strain KIN4/I / DSM 18386 / JCM 14125), this protein is Uridylate kinase.